Consider the following 256-residue polypeptide: MYLEQLKEVNPLTICITNNVVKNFTANGLLALGASPAMSECIEDLEDLLKVADALLINIGTLTKESWQLYQEAIKIANKNQVPVVLDPVAAGASRFRLEVSLDLLKNYSISLLTGNGSEIAALIGEKQASKGADGGKVADLESIAVKANQVFDVPVVVTGETDAIAVRGEVRLLQNGSPLMPLVTGTGCLLGAVLAAFIGSSDRSDDLACLTEAMTVYNVAGEIAEKVAKGKGVGSFQVAFLDALSQMKSEMIMDK.

Residue Met-38 participates in substrate binding. The ATP site is built by Thr-114 and Thr-159. Gly-186 is a substrate binding site.

It belongs to the Thz kinase family. The cofactor is Mg(2+).

The catalysed reaction is 5-(2-hydroxyethyl)-4-methylthiazole + ATP = 4-methyl-5-(2-phosphooxyethyl)-thiazole + ADP + H(+). It functions in the pathway cofactor biosynthesis; thiamine diphosphate biosynthesis; 4-methyl-5-(2-phosphoethyl)-thiazole from 5-(2-hydroxyethyl)-4-methylthiazole: step 1/1. Its function is as follows. Catalyzes the phosphorylation of the hydroxyl group of 4-methyl-5-beta-hydroxyethylthiazole (THZ). This chain is Hydroxyethylthiazole kinase, found in Streptococcus agalactiae serotype V (strain ATCC BAA-611 / 2603 V/R).